We begin with the raw amino-acid sequence, 357 residues long: 4-hydroxy-3-methylbut-2-en-1-yl diphosphate synthase (flavodoxin) (357 aa).

Residues cysteine 265, cysteine 268, cysteine 300, and glutamate 307 each coordinate [4Fe-4S] cluster.

The protein belongs to the IspG family. In terms of assembly, homodimer. The cofactor is [4Fe-4S] cluster.

It carries out the reaction (2E)-4-hydroxy-3-methylbut-2-enyl diphosphate + oxidized [flavodoxin] + H2O + 2 H(+) = 2-C-methyl-D-erythritol 2,4-cyclic diphosphate + reduced [flavodoxin]. It participates in isoprenoid biosynthesis; isopentenyl diphosphate biosynthesis via DXP pathway; isopentenyl diphosphate from 1-deoxy-D-xylulose 5-phosphate: step 5/6. In terms of biological role, converts 2C-methyl-D-erythritol 2,4-cyclodiphosphate (ME-2,4cPP) into 1-hydroxy-2-methyl-2-(E)-butenyl 4-diphosphate. This is 4-hydroxy-3-methylbut-2-en-1-yl diphosphate synthase (flavodoxin) from Aquifex aeolicus (strain VF5).